The following is a 145-amino-acid chain: D-aminoacyl-tRNA deacylase (145 aa).

The Gly-cisPro motif, important for rejection of L-amino acids signature appears at 137–138 (GP).

The protein belongs to the DTD family. Homodimer.

It localises to the cytoplasm. It carries out the reaction glycyl-tRNA(Ala) + H2O = tRNA(Ala) + glycine + H(+). It catalyses the reaction a D-aminoacyl-tRNA + H2O = a tRNA + a D-alpha-amino acid + H(+). Functionally, an aminoacyl-tRNA editing enzyme that deacylates mischarged D-aminoacyl-tRNAs. Also deacylates mischarged glycyl-tRNA(Ala), protecting cells against glycine mischarging by AlaRS. Acts via tRNA-based rather than protein-based catalysis; rejects L-amino acids rather than detecting D-amino acids in the active site. By recycling D-aminoacyl-tRNA to D-amino acids and free tRNA molecules, this enzyme counteracts the toxicity associated with the formation of D-aminoacyl-tRNA entities in vivo and helps enforce protein L-homochirality. In Lactobacillus gasseri (strain ATCC 33323 / DSM 20243 / BCRC 14619 / CIP 102991 / JCM 1131 / KCTC 3163 / NCIMB 11718 / NCTC 13722 / AM63), this protein is D-aminoacyl-tRNA deacylase.